Here is a 46-residue protein sequence, read N- to C-terminus: Succinate dehydrogenase subunit 8, mitochondrial (46 aa).

Component of complex II composed of eight subunits in plants: four classical SDH subunits SDH1, SDH2, SDH3 and SDH4 (a flavoprotein (FP), an iron-sulfur protein (IP), and a cytochrome b composed of a large and a small subunit.), as well as four subunits unknown in mitochondria from bacteria and heterotrophic eukaryotes.

It is found in the mitochondrion inner membrane. The protein operates within carbohydrate metabolism; tricarboxylic acid cycle. The protein is Succinate dehydrogenase subunit 8, mitochondrial of Arabidopsis thaliana (Mouse-ear cress).